Reading from the N-terminus, the 152-residue chain is Small ribosomal subunit protein uS19z (152 aa).

The protein belongs to the universal ribosomal protein uS19 family.

Its subcellular location is the cytoplasm. The chain is Small ribosomal subunit protein uS19z (RPS15B) from Arabidopsis thaliana (Mouse-ear cress).